Here is an 82-residue protein sequence, read N- to C-terminus: Delta-ctenitoxin-Pn2a (82 aa).

Positions 1 to 17 are cleaved as a signal peptide; it reads MKVAILFLSILVLAVAS. A propeptide spanning residues 18 to 34 is cleaved from the precursor; the sequence is ESIEESRDDFAVEELGR. Intrachain disulfides connect cysteine 37/cysteine 51, cysteine 44/cysteine 57, cysteine 48/cysteine 80, cysteine 50/cysteine 65, and cysteine 59/cysteine 63.

This sequence belongs to the neurotoxin 03 (Tx2) family. 06 subfamily. In terms of tissue distribution, expressed by the venom gland.

It is found in the secreted. Its function is as follows. Toxin that is known to potentiate erectile function. It binds voltage-dependently to sodium channels (Nav), inhibits the inactivation of the activated channels and decreases the peak inward current. The toxin delays inactivation of Nav1.2/SCN2A, Nav1.3/SCN3A, Nav1.4/SCN4A and Nav1.8/SCN10A, slows the inactivation process and decreases the sodium peak amplitude of Nav1.5/SCN5A and Nav1.6/SCN8A. In vivo, it enhances erectile function by inducing the release of nictric oxide (NO): it slows the sodium current, leading to depolarization, which leads to an increase in calcium influx (probably via activation of N-type calcium channels) which in turn activates neuronal NO synthase (nNOS/NOS1), inducing nitric oxide (NO) production. In a final step, NO activates soluble guanylate cyclase (GUCY1A1/GUCY1B1) which in turn increases cGMP formation, resulting in penile erection. It is noteworthy that the toxin does not provoke erection by inhibiting phosphodiesterase type 5 (PDE5A), an enzyme that hydrolysis cGMP. In vivo, it also causes scratching, lacrimation, hypersalivation, sweating and agitation followed by spastic paralysis of the anterior and posterior extremities and death at dose levels of 0.79 mg/mouse. It is insecticidal to the larval and adult forms of the house fly. The toxin also improves cavernosal relaxation in different models where erectile dysfunction is observed, such as deoxycorticosterone-acetate (DOCA)-salt hypertensive rats, mice models for type-1 diabetes, as well as elderly rats. The chain is Delta-ctenitoxin-Pn2a from Phoneutria nigriventer (Brazilian armed spider).